A 334-amino-acid polypeptide reads, in one-letter code: Holliday junction branch migration complex subunit RuvB (334 aa).

Positions 1 to 181 (MSEFLTPERT…GIILELDFYT (181 aa)) are large ATPase domain (RuvB-L). ADP-binding residues include L19 and R20. The ATP site is built by E26, F27, and I28. ADP contacts are provided by F27, I28, G61, L62, G63, K64, T65, and T66. 2 residues coordinate ATP: L62 and G63. ATP-binding positions include 127 to 129 (EDF) and R170. Positions 180, 216, and 217 each coordinate ADP. The interval 182–255 (VKELKEIIKR…TMEVLNIDDE (74 aa)) is small ATPAse domain (RuvB-S). P216 serves as a coordination point for ATP. The tract at residues 256–334 (GLDEFDRKIL…KYEVPENRLF (79 aa)) is head domain (RuvB-H). Residues R309 and R314 each contribute to the DNA site.

Belongs to the RuvB family. Homohexamer. Forms an RuvA(8)-RuvB(12)-Holliday junction (HJ) complex. HJ DNA is sandwiched between 2 RuvA tetramers; dsDNA enters through RuvA and exits via RuvB. An RuvB hexamer assembles on each DNA strand where it exits the tetramer. Each RuvB hexamer is contacted by two RuvA subunits (via domain III) on 2 adjacent RuvB subunits; this complex drives branch migration. In the full resolvosome a probable DNA-RuvA(4)-RuvB(12)-RuvC(2) complex forms which resolves the HJ.

It localises to the cytoplasm. The enzyme catalyses ATP + H2O = ADP + phosphate + H(+). In terms of biological role, the RuvA-RuvB-RuvC complex processes Holliday junction (HJ) DNA during genetic recombination and DNA repair, while the RuvA-RuvB complex plays an important role in the rescue of blocked DNA replication forks via replication fork reversal (RFR). RuvA specifically binds to HJ cruciform DNA, conferring on it an open structure. The RuvB hexamer acts as an ATP-dependent pump, pulling dsDNA into and through the RuvAB complex. RuvB forms 2 homohexamers on either side of HJ DNA bound by 1 or 2 RuvA tetramers; 4 subunits per hexamer contact DNA at a time. Coordinated motions by a converter formed by DNA-disengaged RuvB subunits stimulates ATP hydrolysis and nucleotide exchange. Immobilization of the converter enables RuvB to convert the ATP-contained energy into a lever motion, pulling 2 nucleotides of DNA out of the RuvA tetramer per ATP hydrolyzed, thus driving DNA branch migration. The RuvB motors rotate together with the DNA substrate, which together with the progressing nucleotide cycle form the mechanistic basis for DNA recombination by continuous HJ branch migration. Branch migration allows RuvC to scan DNA until it finds its consensus sequence, where it cleaves and resolves cruciform DNA. Its function is as follows. Promotes Holliday junction (HJ) branch migration in conjunction with RuvA. Subunits can be free, ADP- or ATP-bound; nucleotide binding changes during the reaction cycle. Has a DNA-dependent ATPase activity; dsDNA and supercoiled DNA but not ssDNA stimulate activity. The protein is Holliday junction branch migration complex subunit RuvB of Thermotoga maritima (strain ATCC 43589 / DSM 3109 / JCM 10099 / NBRC 100826 / MSB8).